The primary structure comprises 123 residues: Protein Wnt-7a (123 aa).

The O-palmitoleoyl serine; by PORCN moiety is linked to residue Ser-1. The interval 33 to 61 is disordered linker; the sequence is VEPVRASRNKRPTFLKIKKPLSYLKPMDT. Cys-89 and Cys-104 are joined by a disulfide. N-linked (GlcNAc...) asparagine glycosylation occurs at Asn-90.

The protein belongs to the Wnt family. Post-translationally, palmitoleoylation is required for efficient binding to frizzled receptors. Depalmitoleoylation leads to Wnt signaling pathway inhibition.

The protein resides in the secreted. It is found in the extracellular space. It localises to the extracellular matrix. Ligand for members of the frizzled family of seven transmembrane receptors that functions in the canonical Wnt/beta-catenin signaling pathway. Plays an important role in embryonic development, including dorsal versus ventral patterning during limb development, skeleton development and urogenital tract development. Required for central nervous system (CNS) angiogenesis and blood-brain barrier regulation. The chain is Protein Wnt-7a (WNT-7A) from Plethodon jordani (Red-cheeked salamander).